A 1120-amino-acid polypeptide reads, in one-letter code: Elongation factor-like GTPase 1 (1120 aa).

A tr-type G domain is found at 17–272 (ANIRNICVLA…LMKTLWGDYY (256 aa)). GTP contacts are provided by residues 26–33 (AHVDHGKT), 92–96 (DSPGH), and 146–149 (NKID). Residues 430 to 496 (PRPLTQEEIA…VESMTPKPVL (67 aa)) are disordered. 2 stretches are compositionally biased toward basic and acidic residues: residues 438–452 (IAQRRERARQRHAEK) and 475–484 (PKGEEPRGDE). At lysine 528 the chain carries N6-acetyllysine. Positions 907-930 (ASDLAKEGQEENETCSGGNENQEL) are disordered. The segment covering 920–930 (TCSGGNENQEL) has biased composition (polar residues).

This sequence belongs to the TRAFAC class translation factor GTPase superfamily. Classic translation factor GTPase family. In terms of assembly, associates with the 60S ribosomal subunit. Found in a complex consisting of the 60S ribosomal subunit, SBDS and EFL1. Interacts with SBDS and binds to GTP and GDP; the interaction with SBDS decreases EFL1 affinity for GDP and facilitates GDP release. As to expression, expressed at low levels in brain. Expression is highly increased in glioma tissues.

It catalyses the reaction GTP + H2O = GDP + phosphate + H(+). Its activity is regulated as follows. GTPase activity is stimulated in the presence of 60S ribosome subunits. Functionally, GTPase involved in the biogenesis of the 60S ribosomal subunit and translational activation of ribosomes. Together with SBDS, triggers the GTP-dependent release of EIF6 from 60S pre-ribosomes in the cytoplasm, thereby activating ribosomes for translation competence by allowing 80S ribosome assembly and facilitating EIF6 recycling to the nucleus, where it is required for 60S rRNA processing and nuclear export. The protein is Elongation factor-like GTPase 1 of Homo sapiens (Human).